Consider the following 150-residue polypeptide: SsrA-binding protein (150 aa).

The segment at aspartate 130–arginine 150 is disordered.

The protein belongs to the SmpB family.

It localises to the cytoplasm. In terms of biological role, required for rescue of stalled ribosomes mediated by trans-translation. Binds to transfer-messenger RNA (tmRNA), required for stable association of tmRNA with ribosomes. tmRNA and SmpB together mimic tRNA shape, replacing the anticodon stem-loop with SmpB. tmRNA is encoded by the ssrA gene; the 2 termini fold to resemble tRNA(Ala) and it encodes a 'tag peptide', a short internal open reading frame. During trans-translation Ala-aminoacylated tmRNA acts like a tRNA, entering the A-site of stalled ribosomes, displacing the stalled mRNA. The ribosome then switches to translate the ORF on the tmRNA; the nascent peptide is terminated with the 'tag peptide' encoded by the tmRNA and targeted for degradation. The ribosome is freed to recommence translation, which seems to be the essential function of trans-translation. The polypeptide is SsrA-binding protein (Phocaeicola vulgatus (strain ATCC 8482 / DSM 1447 / JCM 5826 / CCUG 4940 / NBRC 14291 / NCTC 11154) (Bacteroides vulgatus)).